A 137-amino-acid polypeptide reads, in one-letter code: Large ribosomal subunit protein uL16 (137 aa).

It belongs to the universal ribosomal protein uL16 family. Part of the 50S ribosomal subunit.

Its function is as follows. Binds 23S rRNA and is also seen to make contacts with the A and possibly P site tRNAs. The protein is Large ribosomal subunit protein uL16 of Magnetococcus marinus (strain ATCC BAA-1437 / JCM 17883 / MC-1).